We begin with the raw amino-acid sequence, 419 residues long: Tyrosine--tRNA ligase (419 aa).

Tyrosine 34 is a binding site for L-tyrosine. The 'HIGH' region motif lies at 39-48 (PSGDSMHIGH). 2 residues coordinate L-tyrosine: tyrosine 168 and glutamine 172. A 'KMSKS' region motif is present at residues 230-234 (KFGKS). Lysine 233 contributes to the ATP binding site. In terms of domain architecture, S4 RNA-binding spans 352–418 (VNLVDWLVTL…GKKKYFLVSY (67 aa)).

This sequence belongs to the class-I aminoacyl-tRNA synthetase family. TyrS type 1 subfamily. Homodimer.

It localises to the cytoplasm. The enzyme catalyses tRNA(Tyr) + L-tyrosine + ATP = L-tyrosyl-tRNA(Tyr) + AMP + diphosphate + H(+). Catalyzes the attachment of tyrosine to tRNA(Tyr) in a two-step reaction: tyrosine is first activated by ATP to form Tyr-AMP and then transferred to the acceptor end of tRNA(Tyr). This Listeria innocua serovar 6a (strain ATCC BAA-680 / CLIP 11262) protein is Tyrosine--tRNA ligase.